A 663-amino-acid chain; its full sequence is MGAVSRDDYIALCTELVEHDRRYYVLNQPTISDYSYDVKMRELQEIEVQHPEWKVSWSPTMYLGDRPSGQFPVVPHSSPMLSIANVYSLQELEEFFSRTEKLLGYSPGYSLELKIDGIAVAIRYEKRLFAQALSRGNGVKGEDITANVSTIRSLPMRLPQEAPEDLEVRGEVFLSYEAFEELNACQREQGKLEFANPRNAAGGTLKLLSSKEAAKRKLDLSVYGLITDQKKRSHFENLQLCSQWGFFVAGMPKQCRSRQDVVERIREIEEMRAALPMAIDGVVIKVDNIAYQDRLGLTSKHYRWAIAYKYAPERAETILEDIVVQVGKTGILTPVAELAPVFLSGSRVSRASLYNQDEIEKKDIRIGDSVYVEKGGEVIPKIVGINLAKRSLESEPWKMPSLCPVCHEPVVKEKVSVRCVNPLCSGGMLEKICFFASKSALNIDHLGEKVVTKLFEVGLISSCSDIFALAEEDLKQVPGFKDRSIQNLLASIAGAKKVALDRLLTALSIPFVGSSGAIALADHFGTLDKVIEASLDELMSIEGIGPKVAASIVAFFSKHENREEIRRMQELGVQVLSKQSDKEAPLQGKVFVLTGTLQQMTRTQAEERIRCLGGKVSSSVSKSTYAVIAGSEAGGKLKKAQDLGLSIWNESELLRILDAKSVS.

NAD(+) contacts are provided by residues 33–37 (DYSYD), 82–83 (SI), and Glu112. The active-site N6-AMP-lysine intermediate is the Lys114. 4 residues coordinate NAD(+): Arg135, Glu171, Lys285, and Lys309. Residues Cys403, Cys406, Cys419, and Cys424 each contribute to the Zn(2+) site. Residues 581 to 663 (DKEAPLQGKV…LRILDAKSVS (83 aa)) enclose the BRCT domain.

Belongs to the NAD-dependent DNA ligase family. LigA subfamily. Mg(2+) is required as a cofactor. Requires Mn(2+) as cofactor.

It catalyses the reaction NAD(+) + (deoxyribonucleotide)n-3'-hydroxyl + 5'-phospho-(deoxyribonucleotide)m = (deoxyribonucleotide)n+m + AMP + beta-nicotinamide D-nucleotide.. Its function is as follows. DNA ligase that catalyzes the formation of phosphodiester linkages between 5'-phosphoryl and 3'-hydroxyl groups in double-stranded DNA using NAD as a coenzyme and as the energy source for the reaction. It is essential for DNA replication and repair of damaged DNA. This is DNA ligase from Chlamydia trachomatis serovar D (strain ATCC VR-885 / DSM 19411 / UW-3/Cx).